The chain runs to 193 residues: Ion-translocating oxidoreductase complex subunit A (193 aa).

Helical transmembrane passes span 5–25 (LLLFVGTVLVNNFVLVKFLGL), 47–67 (FVMTLASVSAWVINTFILVPL), 72–92 (LRTLSFILVIAVVVQFTEMVV), 102–122 (LLGIFLPLITTNCAVLGVALL), 134–154 (AVYGFSAAAGFSLVMVLFAAI), and 171–191 (SIALITAGLMSLAFMGFTGLV).

The protein belongs to the NqrDE/RnfAE family. In terms of assembly, the complex is composed of six subunits: RnfA, RnfB, RnfC, RnfD, RnfE and RnfG.

The protein resides in the cell inner membrane. Its function is as follows. Part of a membrane-bound complex that couples electron transfer with translocation of ions across the membrane. The chain is Ion-translocating oxidoreductase complex subunit A from Serratia proteamaculans (strain 568).